Here is a 386-residue protein sequence, read N- to C-terminus: MSKNYLFTSESVSEGHPDKLADQISDAILDEILKQDKNARVACETLVKTGMALVAGEITTSAWIDIEELVRKVIVETGYDNANKGIDGRTCSVINAIGKQSSDIAQGVDRGSLEDLGAGDQGLMFGFATNETPTLMPSAIYYSHLLMRKQAEHRKSGKLGWLRPDAKAQVTLAYENDKPKFIDTIVLSTQHNESISQKDLHDAVIEEIVKEVIPAELITKDTKYHINPTGVFLIGGPQGDCGLTGRKIIVDTYGGAAHHGGGAFSGKDPSKVDRSGAYMGRYIAKNVVAAGLADKCEVQVAYAIGVAKPVSLMVNTFGTGKISDSKIEKLVSETFDLRVGKIIENLDLLRPIYRKTSNYGHFGRELPEFTWEKIDKADNLKSAAKI.

Histidine 16 is a binding site for ATP. Aspartate 18 contacts Mg(2+). Residue glutamate 44 coordinates K(+). Glutamate 57 and glutamine 100 together coordinate L-methionine. Residues 100-110 (QSSDIAQGVDR) form a flexible loop region. Residues 165–167 (DAK), aspartate 240, 246–247 (RK), alanine 263, and lysine 267 each bind ATP. Residue aspartate 240 coordinates L-methionine. An L-methionine-binding site is contributed by lysine 271.

The protein belongs to the AdoMet synthase family. Homotetramer; dimer of dimers. Requires Mg(2+) as cofactor. K(+) is required as a cofactor.

The protein resides in the cytoplasm. It catalyses the reaction L-methionine + ATP + H2O = S-adenosyl-L-methionine + phosphate + diphosphate. The protein operates within amino-acid biosynthesis; S-adenosyl-L-methionine biosynthesis; S-adenosyl-L-methionine from L-methionine: step 1/1. In terms of biological role, catalyzes the formation of S-adenosylmethionine (AdoMet) from methionine and ATP. The overall synthetic reaction is composed of two sequential steps, AdoMet formation and the subsequent tripolyphosphate hydrolysis which occurs prior to release of AdoMet from the enzyme. The polypeptide is S-adenosylmethionine synthase (Francisella philomiragia subsp. philomiragia (strain ATCC 25017 / CCUG 19701 / FSC 153 / O#319-036)).